Reading from the N-terminus, the 69-residue chain is MSFNLRGAVLANVSGNSQDQLQETIVDAIQSGEEKMLPGLGVLFEVIWKNADENEKHEMLETLEQGLKK.

The protein belongs to the SspI family.

It localises to the spore core. This is Small, acid-soluble spore protein I from Bacillus cereus (strain G9842).